Here is a 312-residue protein sequence, read N- to C-terminus: tRNA uridine(34) hydroxylase (312 aa).

The Rhodanese domain maps to 123 to 217; it reads SDPEVLLIDT…YLEEVPQEQS (95 aa). Catalysis depends on Cys177, which acts as the Cysteine persulfide intermediate. Over residues 282 to 293 the composition is skewed to basic and acidic residues; sequence ARERQKQIELAR. The disordered stretch occupies residues 282-312; it reads ARERQKQIELARQRNQPHPLGRDPRQSTLEN.

The protein belongs to the TrhO family.

It carries out the reaction uridine(34) in tRNA + AH2 + O2 = 5-hydroxyuridine(34) in tRNA + A + H2O. Catalyzes oxygen-dependent 5-hydroxyuridine (ho5U) modification at position 34 in tRNAs. In Pseudomonas paraeruginosa (strain DSM 24068 / PA7) (Pseudomonas aeruginosa (strain PA7)), this protein is tRNA uridine(34) hydroxylase.